Consider the following 99-residue polypeptide: NADH-quinone oxidoreductase subunit K (99 aa).

Helical transmembrane passes span 3-23, 28-48, and 62-82; these read PENY…GVLL, IVVF…FVTF, and FFTM…IMII.

This sequence belongs to the complex I subunit 4L family. As to quaternary structure, NDH-1 is composed of 14 different subunits. Subunits NuoA, H, J, K, L, M, N constitute the membrane sector of the complex.

It localises to the cell membrane. The catalysed reaction is a quinone + NADH + 5 H(+)(in) = a quinol + NAD(+) + 4 H(+)(out). In terms of biological role, NDH-1 shuttles electrons from NADH, via FMN and iron-sulfur (Fe-S) centers, to quinones in the respiratory chain. The immediate electron acceptor for the enzyme in this species is believed to be a menaquinone. Couples the redox reaction to proton translocation (for every two electrons transferred, four hydrogen ions are translocated across the cytoplasmic membrane), and thus conserves the redox energy in a proton gradient. In Rhodococcus erythropolis (strain PR4 / NBRC 100887), this protein is NADH-quinone oxidoreductase subunit K.